The following is a 355-amino-acid chain: BAG family molecular chaperone regulator 1 (355 aa).

A disordered region spans residues 1–112; that stretch reads MAGRSAARRP…KNVTGTQVEE (112 aa). Over residues 26–39 the composition is skewed to basic and acidic residues; it reads PAREPRQSESRAER. Polar residues-rich tracts occupy residues 80–91 and 102–111; these read SSQSEKVGSSSR and SKNVTGTQVE. 7 repeat units span residues 103-108, 111-116, 117-122, 123-128, 129-134, 141-146, and 147-152. Positions 111-209 are 7 X 6 AA tandem repeat of E-E-X(4); the sequence is EEVTKIEEAT…LIFKGKSLKE (99 aa). The tract at residues 132–151 is disordered; the sequence is TQTDNMAKTEEMVQTEEMET. In terms of domain architecture, Ubiquitin-like spans 154 to 234; that stretch reads LSVIVTHSNE…VMLIGEKSNP (81 aa). The tract at residues 182 to 229 is interaction with HSPA8; that stretch reads DLAQLVEEATGVPLPFQKLIFKGKSLKEMETPLSALGMQNGCRVMLIG. The tract at residues 226-355 is interaction with PPP1R15A; the sequence is MLIGEKSNPE…LQSTNLALAE (130 aa). Positions 256–336 constitute a BAG domain; that stretch reads HLQELNKELS…VFLAECDTVE (81 aa).

In terms of assembly, homodimer. Forms a heteromeric complex with HSP70/HSC70. Binds to the ATPase domain of HSP/HSC70 chaperones. Interacts with NR3C1. Interacts with the N-terminal region of MAPRE2. Interacts with PPP1R15A. Interacts with BCL2 in an ATP-dependent manner. Interacts with SIAH1, HSPA8 (via NBD), HSPA1A (via NBD) and HSPA1B (via NBD). Interacts with SIAH2. Interacts with ESR1; the interaction is promoted in the absence of estradiol (17-beta-estradiol/E2). Post-translationally, ubiquitinated; mediated by SIAH1 or SIAH2 and leading to its subsequent proteasomal degradation. In terms of tissue distribution, isoform 2 is expressed in the heart, lung, kidney and spinal cord. Isoform 1 and isoform 2 are expressed in hematopoietic cell lines. The levels of isoform 2 are relatively constant in all the cell lines examined while the levels of isoform 1 are more variable (at protein level). Isoform 1 is expressed in the lung and kidney. Isoform 2 is expressed in various tissues, with highest levels in testis and stomach.

The protein localises to the nucleus. The protein resides in the cytoplasm. Co-chaperone for HSP70 and HSC70 chaperone proteins. Acts as a nucleotide-exchange factor (NEF) promoting the release of ADP from the HSP70 and HSC70 proteins thereby triggering client/substrate protein release. Nucleotide release is mediated via its binding to the nucleotide-binding domain (NBD) of HSPA8/HSC70 where as the substrate release is mediated via its binding to the substrate-binding domain (SBD) of HSPA8/HSC70. Inhibits the pro-apoptotic function of PPP1R15A, and has anti-apoptotic activity. Markedly increases the anti-cell death function of BCL2 induced by various stimuli. Involved in the STUB1-mediated proteasomal degradation of ESR1 in response to age-related circulating estradiol (17-beta-estradiol/E2) decline, thereby promotes neuronal apoptosis in response to ischemic reperfusion injury. The protein is BAG family molecular chaperone regulator 1 (Bag1) of Mus musculus (Mouse).